The primary structure comprises 466 residues: Ras-GEF domain-containing family member 1C (466 aa).

Disordered regions lie at residues 1 to 35 and 443 to 466; these read MPRT…PLLD and SESP…LGKT. The N-terminal Ras-GEF domain occupies 34–164; the sequence is LDGAPSSASL…LLQTLHQKLA (131 aa). Residues 200–446 form the Ras-GEF domain; it reads DPYTLAQQLT…YLASYESESP (247 aa).

Functionally, guanine nucleotide exchange factor (GEF). This Mus musculus (Mouse) protein is Ras-GEF domain-containing family member 1C (Rasgef1c).